Consider the following 84-residue polypeptide: Delta-thalatoxin-Hhe1a (84 aa).

Positions 1–19 (MAYQKIVFVALMLVLAVSA) are cleaved as a signal peptide. The propeptide occupies 20-33 (MRLPDQQDQDISVA). Intrachain disulfides connect C38–C78, C40–C68, and C61–C79.

The protein belongs to the sea anemone sodium channel inhibitory toxin family. Type II subfamily.

The protein localises to the secreted. It is found in the nematocyst. Its function is as follows. Binds specifically to the voltage-gated sodium channel (Nav) and delays its inactivation. The polypeptide is Delta-thalatoxin-Hhe1a (Heterodactyla hemprichii (Hemprich's sea anemone)).